The following is a 387-amino-acid chain: MQVLWFIPTHGDSRYLGTSEGAREVSFDYLKQVAVAADTLGYDGVLIPTGRSCEDPWVVASALAAVTRKLRFLVALRPGLMTPTLAARMAATFDRVSNGRLLVNLVTGGDVAELEGDGLFLNHAERYEASAEFIRVWRDLLAASHENGEISFEGKHVTVKGARVLYPPIQRPHPPVYFGGSSEAAHDLAAEQVETYLTWGEPPADVAKKIADVRARAAKHGRTVRFGIRLHVIVRETDAAAWAAADELISKLDDQTVARAQAVFAKMDSEGQRRMAALHAGGTRRTREALEISPNLWAGVGLVRGGAGTALVGDPKTVAARIEEYAALGIDTFVLSGYPHLEEAYRFAELVFPLLPRKVRDKLPGQVLSGPFGEVMATGIVPIASQS.

It belongs to the SsuD family.

It catalyses the reaction an alkanesulfonate + FMNH2 + O2 = an aldehyde + FMN + sulfite + H2O + 2 H(+). Functionally, catalyzes the desulfonation of aliphatic sulfonates. The protein is Alkanesulfonate monooxygenase of Cupriavidus metallidurans (strain ATCC 43123 / DSM 2839 / NBRC 102507 / CH34) (Ralstonia metallidurans).